Here is a 270-residue protein sequence, read N- to C-terminus: Putative phosphoenolpyruvate synthase regulatory protein (270 aa).

149 to 156 contacts ADP; the sequence is GVSRSGKT.

The protein belongs to the pyruvate, phosphate/water dikinase regulatory protein family. PSRP subfamily.

The catalysed reaction is [pyruvate, water dikinase] + ADP = [pyruvate, water dikinase]-phosphate + AMP + H(+). It carries out the reaction [pyruvate, water dikinase]-phosphate + phosphate + H(+) = [pyruvate, water dikinase] + diphosphate. Its function is as follows. Bifunctional serine/threonine kinase and phosphorylase involved in the regulation of the phosphoenolpyruvate synthase (PEPS) by catalyzing its phosphorylation/dephosphorylation. This chain is Putative phosphoenolpyruvate synthase regulatory protein, found in Pseudoalteromonas atlantica (strain T6c / ATCC BAA-1087).